Reading from the N-terminus, the 503-residue chain is Ribose import ATP-binding protein RbsA (503 aa).

ABC transporter domains follow at residues 10-246 and 256-500; these read LEVR…VGRD and VEPG…TGSE. 42 to 49 is an ATP binding site; that stretch reads GENGAGKS.

Belongs to the ABC transporter superfamily. Ribose importer (TC 3.A.1.2.1) family. The complex is composed of an ATP-binding protein (RbsA), two transmembrane proteins (RbsC) and a solute-binding protein (RbsB).

The protein resides in the cell membrane. It catalyses the reaction D-ribose(out) + ATP + H2O = D-ribose(in) + ADP + phosphate + H(+). Its function is as follows. Part of the ABC transporter complex RbsABC involved in ribose import. Responsible for energy coupling to the transport system. The polypeptide is Ribose import ATP-binding protein RbsA (Rhodococcus jostii (strain RHA1)).